A 1455-amino-acid polypeptide reads, in one-letter code: DNA-directed RNA polymerase subunit beta (1455 aa).

It belongs to the RNA polymerase beta chain family. The RNAP catalytic core consists of 2 alpha, 1 beta, 1 beta' and 1 omega subunit. When a sigma factor is associated with the core the holoenzyme is formed, which can initiate transcription.

It carries out the reaction RNA(n) + a ribonucleoside 5'-triphosphate = RNA(n+1) + diphosphate. Functionally, DNA-dependent RNA polymerase catalyzes the transcription of DNA into RNA using the four ribonucleoside triphosphates as substrates. This Rhizorhabdus wittichii (strain DSM 6014 / CCUG 31198 / JCM 15750 / NBRC 105917 / EY 4224 / RW1) (Sphingomonas wittichii) protein is DNA-directed RNA polymerase subunit beta.